We begin with the raw amino-acid sequence, 230 residues long: Ribosomal RNA large subunit methyltransferase E (230 aa).

Positions 1-13 are enriched in gly residues; that stretch reads MSGSGGKGGGRGG. The tract at residues 1–22 is disordered; the sequence is MSGSGGKGGGRGGLHVRVKTAK. Gly-81, Trp-83, Asp-100, Asp-116, and Asp-140 together coordinate S-adenosyl-L-methionine. Lys-180 (proton acceptor) is an active-site residue.

This sequence belongs to the class I-like SAM-binding methyltransferase superfamily. RNA methyltransferase RlmE family.

The protein localises to the cytoplasm. It catalyses the reaction uridine(2552) in 23S rRNA + S-adenosyl-L-methionine = 2'-O-methyluridine(2552) in 23S rRNA + S-adenosyl-L-homocysteine + H(+). In terms of biological role, specifically methylates the uridine in position 2552 of 23S rRNA at the 2'-O position of the ribose in the fully assembled 50S ribosomal subunit. In Sphingopyxis alaskensis (strain DSM 13593 / LMG 18877 / RB2256) (Sphingomonas alaskensis), this protein is Ribosomal RNA large subunit methyltransferase E.